The sequence spans 243 residues: Homeobox protein goosecoid isoform A (243 aa).

Positions 148-207 (KRRHRTIFTDEQLEALENLFQETKYPDVGTREQLARRVHLREEKVEVWFKNRRAKWRRQK) form a DNA-binding region, homeobox. Positions 201–243 (AKWRRQKRSSSEESENAQKWNKSSKNSAEKADEQVKSDLDSDS) are disordered. Positions 217–226 (AQKWNKSSKN) are enriched in polar residues. The span at 227-243 (SAEKADEQVKSDLDSDS) shows a compositional bias: basic and acidic residues.

The protein belongs to the paired homeobox family. Bicoid subfamily. At the start of gastrulation, it is found in a patch of cells encompassing 60 degrees of arc on the dorsal marginal zone.

It localises to the nucleus. Functionally, plays a central role in executing Spemann's organizer phenomenon (the dorsal blastopore lip of the early Xenopus laevis gastrula can organize a complete secondary body axis when transplanted to another embryo). The protein is Homeobox protein goosecoid isoform A (gsc-a) of Xenopus laevis (African clawed frog).